Consider the following 243-residue polypeptide: 1-(5-phosphoribosyl)-5-[(5-phosphoribosylamino)methylideneamino] imidazole-4-carboxamide isomerase (243 aa).

Asp-8 serves as the catalytic Proton acceptor. Catalysis depends on Asp-129, which acts as the Proton donor.

It belongs to the HisA/HisF family.

The protein resides in the cytoplasm. The catalysed reaction is 1-(5-phospho-beta-D-ribosyl)-5-[(5-phospho-beta-D-ribosylamino)methylideneamino]imidazole-4-carboxamide = 5-[(5-phospho-1-deoxy-D-ribulos-1-ylimino)methylamino]-1-(5-phospho-beta-D-ribosyl)imidazole-4-carboxamide. It participates in amino-acid biosynthesis; L-histidine biosynthesis; L-histidine from 5-phospho-alpha-D-ribose 1-diphosphate: step 4/9. The protein is 1-(5-phosphoribosyl)-5-[(5-phosphoribosylamino)methylideneamino] imidazole-4-carboxamide isomerase of Brucella abortus (strain 2308).